The primary structure comprises 711 residues: RB-associated KRAB zinc finger protein (711 aa).

The 72-residue stretch at 8-79 (LSFKDVAVAF…EGDRHAQRHL (72 aa)) folds into the KRAB domain. Glycyl lysine isopeptide (Lys-Gly) (interchain with G-Cter in SUMO2) cross-links involve residues K97 and K256. Residues 170 to 257 (AYGESLEDFN…YPRSQMELKP (88 aa)) are required for interaction with RB1. 2 consecutive C2H2-type zinc fingers follow at residues 258 to 280 (FECTQCGKSFCKKSKFIIHQRAH) and 286 to 308 (YACSVCGKSFSQKGTLTVHRRSH). K312 is covalently cross-linked (Glycyl lysine isopeptide (Lys-Gly) (interchain with G-Cter in SUMO2)). 6 consecutive C2H2-type zinc fingers follow at residues 314–336 (YKCNECGKTFCQKLHLTQHQRTH), 342–364 (YECSECGKSFCQKTHLTLHQRNH), 370–392 (YPCNECGKSFSRKSALNDHQRTH), 398–420 (YKCNECGKSYYRKSTLITHQRTH), 426–448 (YQCSECGKFFSRVSYLTIHYRSH), and 454–476 (YECTECGKTFNLNSAFIRHWKVH). K354 is covalently cross-linked (Glycyl lysine isopeptide (Lys-Gly) (interchain with G-Cter in SUMO2)). Positions 414-711 (ITHQRTHTGE…TVNVLTVEKL (298 aa)) are interaction with AR. Residues 508–530 (YECNECGKTFLDSSAFHRHQSVP) form a C2H2-type 9; degenerate zinc finger. A Glycyl lysine isopeptide (Lys-Gly) (interchain with G-Cter in SUMO2) cross-link involves residue K534. C2H2-type zinc fingers lie at residues 536–558 (YECNICGKSFSDSSCYTVHYRGH), 564–586 (FGCSECGKTFSHNSSLFRHQRVH), 592–614 (YECYECGKFFSQKSYLTIHHRIH), 620–642 (YECSKCGKVFSRMSNLTVHYRSH), 648–670 (YECNECGKVFSQKSYLTVHYRTH), and 676–698 (YECNECGKKFHHRSAFNSHQRIH).

It belongs to the krueppel C2H2-type zinc-finger protein family. As to quaternary structure, interacts with AR. May also interact with other nuclear hormone receptors such as NR3C1/GR. Interacts with RB1.

The protein localises to the nucleus. In terms of biological role, may repress E2F-dependent transcription. May promote AR-dependent transcription. The chain is RB-associated KRAB zinc finger protein (Rbak) from Mus musculus (Mouse).